A 154-amino-acid polypeptide reads, in one-letter code: Oleosin 16.4 kDa (154 aa).

N-acetylalanine is present on Ala-2. The interval 2–33 is polar; it reads ADRDRSYRTFDQVVRGDRTNYQSGPSTTQVLT. The next 3 membrane-spanning stretches (helical) occupy residues 31-51, 65-85, and 86-106; these read VLTV…AGLT, LFVI…MAVA, and GFLS…YVFN. The hydrophobic stretch occupies residues 34 to 105; sequence VLTLLPIGGT…TGLSSLSYVF (72 aa).

This sequence belongs to the oleosin family.

Its subcellular location is the lipid droplet. It localises to the membrane. Functionally, may have a structural role to stabilize the lipid body during desiccation of the seed by preventing coalescence of the oil. Probably interacts with both lipid and phospholipid moieties of lipid bodies. May also provide recognition signals for specific lipase anchorage in lipolysis during seedling growth. This Gossypium hirsutum (Upland cotton) protein is Oleosin 16.4 kDa (MATP7).